Consider the following 428-residue polypeptide: Trigger factor (428 aa).

One can recognise a PPIase FKBP-type domain in the interval 163–248 (GDTVVIDFEG…VHEVKAKQLP (86 aa)).

It belongs to the FKBP-type PPIase family. Tig subfamily.

It is found in the cytoplasm. It catalyses the reaction [protein]-peptidylproline (omega=180) = [protein]-peptidylproline (omega=0). In terms of biological role, involved in protein export. Acts as a chaperone by maintaining the newly synthesized protein in an open conformation. Functions as a peptidyl-prolyl cis-trans isomerase. The protein is Trigger factor of Geobacillus kaustophilus (strain HTA426).